Reading from the N-terminus, the 1358-residue chain is Phosphoinositide 3-kinase regulatory subunit 4 (1358 aa).

Residue G2 is the site of N-myristoyl glycine attachment. The Protein kinase domain maps to 26–324; that stretch reads FEYDKSLGST…AFPEIFYTFL (299 aa). ATP contacts are provided by residues 32 to 40 and K53; that span reads LGSTRFFKV. D148 serves as the catalytic Proton acceptor. HEAT repeat units lie at residues 413 to 450, 458 to 495, 572 to 610, and 612 to 648; these read ILLDRITPYLLHFSNDSVPRVRAEALRTLTKVLALVQE, IYPEYILPGIAHLAQDDATIVRLAYAENIALLAETALR, KANDVLLSHMITFLNDKNDWHLRGAFFDSIVGVAAYVGW, and SSSILKPLLQQGLSDAEEFVIVKALNALTCMCQLGLL. 4 positions are modified to phosphoserine: S808, S813, S853, and S865. WD repeat units lie at residues 991 to 1030, 1040 to 1079, 1093 to 1134, 1139 to 1178, 1182 to 1223, and 1237 to 1278; these read EHKSAVNRIRVSDEHLLFATCSNDGTVKIWNSQKMEGKTT, RIGGRVKTLTFCQGSHYLAIASDNGAVQLLGIEASKLPKS, KEDG…NAWT, LKSGLITSFAVDIHQCWLCIGTSSGAMACWDMRFQLPISS, PSRA…RRLT, and PSPH…RSYV. The interval 1307–1326 is disordered; that stretch reads KQKVGPSDDTPRRGPESLPV. A compositionally biased stretch (basic and acidic residues) spans 1315–1326; that stretch reads DTPRRGPESLPV. The residue at position 1316 (T1316) is a Phosphothreonine. Residues 1327-1358 form a WD 7 repeat; that stretch reads GHHDIITDIATFQTTQGFIVTASRDGIVKVWK.

Belongs to the protein kinase superfamily. Ser/Thr protein kinase family. In terms of assembly, component of the PI3K (PI3KC3/PI3K-III/class III phosphatidylinositol 3-kinase) complex the core of which is composed of the catalytic subunit PIK3C3, the regulatory subunit PIK3R4 and BECN1 associating with additional regulatory/auxiliary subunits to form alternative complex forms. Alternative complex forms containing a fourth regulatory subunit in a mutually exclusive manner are PI3K complex I (PI3KC3-C1) containing ATG14, and PI3K complex II (PI3KC3-C2) containing UVRAG. PI3KC3-C1 displays a V-shaped architecture with PIK3R4 serving as a bridge between PIK3C3 and the ATG14:BECN1 subcomplex. Both, PI3KC3-C1 and PI3KC3-C2, can associate with further regulatory subunits, such as RUBCN, SH3GLB1/Bif-1, AMBRA1 and NRBF2. PI3KC3-C1 probably associates with PIK3CB. Interacts with RAB7A in the presence of PIK3C3/VPS34. Interacts with NRBF2. Interacts with ARMC3. Mn(2+) serves as cofactor. Myristoylated. In terms of processing, probably autophosphorylated.

Its subcellular location is the late endosome. The protein resides in the cytoplasmic vesicle. It is found in the autophagosome. The protein localises to the membrane. It catalyses the reaction L-seryl-[protein] + ATP = O-phospho-L-seryl-[protein] + ADP + H(+). The catalysed reaction is L-threonyl-[protein] + ATP = O-phospho-L-threonyl-[protein] + ADP + H(+). In terms of biological role, regulatory subunit of the PI3K complex that mediates formation of phosphatidylinositol 3-phosphate; different complex forms are believed to play a role in multiple membrane trafficking pathways: PI3KC3-C1 is involved in initiation of autophagosomes and PI3KC3-C2 in maturation of autophagosomes and endocytosis. Involved in regulation of degradative endocytic trafficking and cytokinesis, probably in the context of PI3KC3-C2. The sequence is that of Phosphoinositide 3-kinase regulatory subunit 4 (Pik3r4) from Mus musculus (Mouse).